Consider the following 409-residue polypeptide: Arginine deiminase (409 aa).

Catalysis depends on C399, which acts as the Amidino-cysteine intermediate.

It belongs to the arginine deiminase family.

The protein localises to the cytoplasm. The catalysed reaction is L-arginine + H2O = L-citrulline + NH4(+). It functions in the pathway amino-acid degradation; L-arginine degradation via ADI pathway; carbamoyl phosphate from L-arginine: step 1/2. This chain is Arginine deiminase (arcA), found in Latilactobacillus sakei (Lactobacillus sakei).